We begin with the raw amino-acid sequence, 832 residues long: Sodium/hydrogen exchanger 3 (832 aa).

The first 29 residues, 1–29 (MSGRGGCGPCWGLLLALVLALGALPWTQG), serve as a signal peptide directing secretion. Topologically, residues 30-50 (AEQEHHDEIQGFQIVTFKWHH) are extracellular. Residues 51 to 73 (VQDPYIIALWVLVASLAKIVFHL) form a helical membrane-spanning segment. At 74–81 (SHKVTSVV) the chain is on the cytoplasmic side. The chain crosses the membrane as a helical span at residues 82 to 101 (PESALLIVLGLVLGGIVLAA). Residues 102-110 (DHIASFTLT) lie on the Extracellular side of the membrane. Residues 111-128 (PTVFFFYLLPPIVLDAGY) traverse the membrane as a helical segment. Topologically, residues 129–131 (FMP) are cytoplasmic. A helical membrane pass occupies residues 132-167 (NRLFFSNLGSILLYAVVGTVWNAATTGLSLYGVFLS). A 1,2-diacyl-sn-glycero-3-phospho-(1D-myo-inositol) is bound by residues Gly-140 and Ser-141. The Extracellular portion of the chain corresponds to 168 to 180 (GIMGELKIGLLDF). The helical transmembrane segment at 181–202 (LLFGSLIAAVDPVAVLAVFEEV) threads the bilayer. Residues 203–204 (HV) lie on the Cytoplasmic side of the membrane. The chain crosses the membrane as a helical span at residues 205–236 (NEVLFIIVFGESLLNDAVTVVLYNVFQSFVTL). The Extracellular portion of the chain corresponds to 237-243 (GGDKVTG). Residues 244–278 (VDCVKGIVSFFVVSLGGTLVGVVFAFLLSLVTRFT) form a helical membrane-spanning segment. The Cytoplasmic portion of the chain corresponds to 279–280 (KH). Residues 281–303 (VRVIEPGFVFIISYLSYLTSEML) traverse the membrane as a helical segment. At 304-305 (SL) the chain is on the extracellular side. The helical transmembrane segment at 306-322 (SSILAITFCGICCQKYV) threads the bilayer. The Cytoplasmic portion of the chain corresponds to 323–329 (KANISEQ). Residues 330–358 (SATTVRYTMKMLASGAETIIFMFLGISAV) traverse the membrane as a helical segment. Residues 359 to 366 (DPLIWTWN) lie on the Extracellular side of the membrane. The helical transmembrane segment at 367–388 (TAFVLLTLLFVSVFRAIGVVLQ) threads the bilayer. The Cytoplasmic segment spans residues 389–401 (TWLLNRYRMVQLE). Residue Met-397 participates in a 1,2-diacyl-sn-glycero-3-phospho-(1D-myo-inositol) binding. Residues 402–425 (LIDQVVMSYGGLRGAVAFALVALL) form a helical membrane-spanning segment. Residues 426–432 (DGNKVKE) are Extracellular-facing. A helical transmembrane segment spans residues 433-466 (KNLFVSTTIIVVFFTVIFQGLTIKPLVQWLKVKR). Residues 467–832 (SEHREPKLNE…GAEHPESTHM (366 aa)) lie on the Cytoplasmic side of the membrane. A 1,2-diacyl-sn-glycero-3-phospho-(1D-myo-inositol)-binding residues include Gln-496, Ile-497, and His-499. Residues Ser-554 and Ser-562 each carry the phosphoserine modification. The interaction with EZR stretch occupies residues 575 to 589 (RPSTVEASVSYLLRE). The interval 590 to 667 (SASAVCLDMQ…RKRLESFKSA (78 aa)) is interaction with NHERF4. The segment at 591 to 696 (ASAVCLDMQS…AQKRRNSSVP (106 aa)) is interaction with AHCYL1. Residues Ser-592 and Ser-607 each carry the phosphoserine modification. Ser-663 bears the Phosphoserine; by SGK1 mark. The tract at residues 664-706 (FKSAKLGLGQSKKATKHKRERERAQKRRNSSVPNGKLPLDSPA) is disordered. The segment covering 676–692 (KATKHKRERERAQKRRN) has biased composition (basic residues). 3 positions are modified to phosphoserine: Ser-719, Ser-813, and Ser-816.

It belongs to the monovalent cation:proton antiporter 1 (CPA1) transporter (TC 2.A.36) family. In terms of assembly, homodimer. Found in the forms of complex and dynamic macromolecular complexes. Interacts with CHP1; this interaction increases trafficking and activity at the plasma membrane of SLC9A3. Interacts with CHP2 and SHANK2. Interacts with NHERF4 and interaction decreases in response to elevated calcium ion levels. Binds NHERF1 and NHERF2. Interacts with PDZK1 (via C-terminal PDZ domain). Interacts with AHCYL1; interaction is required for SLC9A3 activity. Interacts with EZR; interaction targets SLC9A3 to the apical membrane. Interacts with SNX27 (via PDZ domains); directs SLC9A3 membrane insertion from early endosomes to the plasma membrane. Phosphorylated by PKA, which inhibits activity. Phosphorylation at Ser-663 by SGK1 is associated with increased abundance at the cell membrane and activity. Phosphorylation at Ser-719 by CSNK2A1 regulates SLC9A3 activity through the formation of multiple signaling complexes. As to expression, intestinal and kidney specific. Most abundant in kidney cortex, followed equally by ileum and ascending colon, then kidney medulla and jejunum. Is absent from duodenum and descending colon.

Its subcellular location is the apical cell membrane. It localises to the cell membrane. The protein localises to the recycling endosome membrane. The protein resides in the early endosome membrane. It carries out the reaction Na(+)(in) + H(+)(out) = Na(+)(out) + H(+)(in). Its activity is regulated as follows. Seems to switch between active and inactive modes in response to various stimuli. Activated directly or indirectly by membrane phosphatidylinositol (PIs). Regulated by a variety of auxiliary proteins, which facilitate the maturation, cell surface expression and function of the transporter. Inhibited specifically by the drug tenapanor. Plasma membrane Na(+)/H(+) antiporter. Exchanges intracellular H(+) ions for extracellular Na(+) in 1:1 stoichiometry, playing a key role in salt and fluid absorption and pH homeostasis. Major apical Na(+)/H(+) exchanger in kidney and intestine playing an important role in renal and intestine Na(+) absorption and blood pressure regulation. The protein is Sodium/hydrogen exchanger 3 (SLC9A3) of Oryctolagus cuniculus (Rabbit).